Here is a 486-residue protein sequence, read N- to C-terminus: Sensor protein PhoQ (486 aa).

Topologically, residues 1–16 (MKKLLRLFFPLSLRVR) are cytoplasmic. The helical transmembrane segment at 17 to 37 (FLLATAAVVLVLSLAYGMVAL) threads the bilayer. Residues 38–194 (IGYSVSFDKT…LKSSYMVWSW (157 aa)) are Periplasmic-facing. The a divalent metal cation site is built by aspartate 151 and aspartate 152. The helical transmembrane segment at 195–215 (FIYVLSANLLLVIPLLWVAAW) threads the bilayer. An HAMP domain is found at 215–266 (WWSLRPIEALAKEVRELEEHNRELLNPATTRELTSLVRNLNRLLKSERERYD). Residues 216-486 (WSLRPIEALA…GRQHSAPKDE (271 aa)) are Cytoplasmic-facing. The Histidine kinase domain occupies 274 to 480 (DLTHSLKTPL…RMEVIFGRQH (207 aa)). A Phosphohistidine; by autocatalysis modification is found at histidine 277. Asparagine 385 serves as a coordination point for Mg(2+). ATP contacts are provided by residues 385–393 (NVLDNACKY), 415–420 (DDGPGI), and 434–446 (RVDTLRPGQGVGL). Position 442 (glutamine 442) interacts with Mg(2+).

As to quaternary structure, homodimer; probably dimerizes via the cytoplasmic domain. Probably interacts with MgrB in the periplasm, altering its activity and that of downstream effector PhoP.

Its subcellular location is the cell inner membrane. The enzyme catalyses ATP + protein L-histidine = ADP + protein N-phospho-L-histidine.. Acetyl-CoA acts as a non-competitive inhibitor of the PhoQ autokinase activity. Feedback inhibited by MgrB, which seems to bind PhoQ, altering its activity and that of downstream effector PhoP. In terms of biological role, member of the two-component regulatory system PhoP/PhoQ involved in adaptation to low Mg(2+) environments and the control of acid resistance genes. In low periplasmic Mg(2+), PhoQ functions as a membrane-associated protein kinase that undergoes autophosphorylation and subsequently transfers the phosphate to PhoP, resulting in the expression of PhoP-activated genes (PAG) and repression of PhoP-repressed genes (PRG). In high periplasmic Mg(2+), acts as a protein phosphatase that dephosphorylates phospho-PhoP, resulting in the repression of PAG and may lead to expression of some PRG. PhoP-regulated transcription is redox-sensitive, being activated when the periplasm becomes more reducing (deletion of dsbA/dsbB, or treatment with dithiothreitol). MgrB acts between DsbA/DsbB and PhoP/PhoQ in this pathway; the 2 periplasmic Cys residues of MgrB are required for its action on PhoQ, which then acts on PhoP. Mediates magnesium influx to the cytosol by activation of mgtA. Promotes expression of the two-component regulatory system rstA/rstB and transcription of the hemL, mgrB, nagA, slyB, vboR and yrbL genes. The chain is Sensor protein PhoQ (phoQ) from Escherichia coli (strain K12).